Reading from the N-terminus, the 208-residue chain is Large ribosomal subunit protein uL3 (208 aa).

Residues 126-150 form a disordered region; that stretch reads NQSRGPMAHGSRYHRRPGSMGPVAP.

It belongs to the universal ribosomal protein uL3 family. In terms of assembly, part of the 50S ribosomal subunit. Forms a cluster with proteins L14 and L19.

In terms of biological role, one of the primary rRNA binding proteins, it binds directly near the 3'-end of the 23S rRNA, where it nucleates assembly of the 50S subunit. The polypeptide is Large ribosomal subunit protein uL3 (Exiguobacterium sibiricum (strain DSM 17290 / CCUG 55495 / CIP 109462 / JCM 13490 / 255-15)).